A 562-amino-acid chain; its full sequence is Sulfite reductase [NADPH] hemoprotein beta-component (562 aa).

Positions 425, 431, 470, and 474 each coordinate [4Fe-4S] cluster. Cysteine 474 is a siroheme binding site.

This sequence belongs to the nitrite and sulfite reductase 4Fe-4S domain family. Alpha(8)-beta(8). The alpha component is a flavoprotein, the beta component is a hemoprotein. Siroheme is required as a cofactor. It depends on [4Fe-4S] cluster as a cofactor.

The enzyme catalyses hydrogen sulfide + 3 NADP(+) + 3 H2O = sulfite + 3 NADPH + 4 H(+). Its pathway is sulfur metabolism; hydrogen sulfide biosynthesis; hydrogen sulfide from sulfite (NADPH route): step 1/1. Component of the sulfite reductase complex that catalyzes the 6-electron reduction of sulfite to sulfide. This is one of several activities required for the biosynthesis of L-cysteine from sulfate. The protein is Sulfite reductase [NADPH] hemoprotein beta-component of Tolumonas auensis (strain DSM 9187 / NBRC 110442 / TA 4).